The sequence spans 254 residues: Bax inhibitor 1 homolog (254 aa).

Over 1–43 (MASTSNRNFFSSNMTQIPMDEKIRIALQFNNLSQSTKQTLTKV) the chain is Cytoplasmic. A helical transmembrane segment spans residues 44–64 (YCALAIGILTATVGVLFSMFI). Residues 65–66 (YR) lie on the Lumenal side of the membrane. A helical membrane pass occupies residues 67–87 (PGFLMTLLLVIGSAILFATTP). Topologically, residues 88-98 (RTQDYKTQVKR) are cytoplasmic. The helical transmembrane segment at 99–119 (FTLFNLVTFVTGMSSSGLIEL) threads the bilayer. The Lumenal portion of the chain corresponds to 120 to 126 (YMDINSS). The helical transmembrane segment at 127 to 147 (IVLNAFMATCGIFISFTLFSL) threads the bilayer. Topologically, residues 148–152 (LTNKR) are cytoplasmic. The chain crosses the membrane as a helical span at residues 153–173 (LYIFIGSSLASLSIGIFVLAL). Residues 174-187 (TRLFGGYSEPLDQL) are Lumenal-facing. Residues 188 to 208 (FILAILASSVLFIIFDTQIMV) traverse the membrane as a helical segment. Residues 209–217 (HRIENLGEK) are Cytoplasmic-facing. Positions 218–238 (DVLFHAFILFYDFVDLFRVIL) form an intramembrane region, helical. Over 239-254 (KILAKKENKNNNKSRR) the chain is Cytoplasmic.

Belongs to the BI1 family.

It localises to the endoplasmic reticulum membrane. The protein is Bax inhibitor 1 homolog of Dictyostelium discoideum (Social amoeba).